The primary structure comprises 931 residues: Valine--tRNA ligase (931 aa).

A 'HIGH' region motif is present at residues 42 to 52 (PNVTGSLHMGH). Positions 523–527 (KMSKS) match the 'KMSKS' region motif. Lys-526 contributes to the ATP binding site. Residues 859–931 (MAGLIDKEAE…EEQLEKIKYL (73 aa)) are a coiled coil.

The protein belongs to the class-I aminoacyl-tRNA synthetase family. ValS type 1 subfamily. Monomer.

It is found in the cytoplasm. It carries out the reaction tRNA(Val) + L-valine + ATP = L-valyl-tRNA(Val) + AMP + diphosphate. Functionally, catalyzes the attachment of valine to tRNA(Val). As ValRS can inadvertently accommodate and process structurally similar amino acids such as threonine, to avoid such errors, it has a 'posttransfer' editing activity that hydrolyzes mischarged Thr-tRNA(Val) in a tRNA-dependent manner. In Alcanivorax borkumensis (strain ATCC 700651 / DSM 11573 / NCIMB 13689 / SK2), this protein is Valine--tRNA ligase.